Here is a 136-residue protein sequence, read N- to C-terminus: Large ribosomal subunit protein uL16 (136 aa).

Belongs to the universal ribosomal protein uL16 family. As to quaternary structure, part of the 50S ribosomal subunit.

Its function is as follows. Binds 23S rRNA and is also seen to make contacts with the A and possibly P site tRNAs. The chain is Large ribosomal subunit protein uL16 from Vesicomyosocius okutanii subsp. Calyptogena okutanii (strain HA).